A 527-amino-acid polypeptide reads, in one-letter code: Flagellar radial spoke protein 5 (527 aa).

Positions 1-22 are disordered; it reads MSEPGEEPVAAPAGPAPDPVLN. A coiled-coil region spans residues 101 to 153; it reads RKWNELTIQAKQLEQEVAGLKGPDAEAKQAELENVKVQIADAEAAVAEVKQSF. Asymmetric dimethylarginine occurs at positions 191 and 366.

Belongs to the aldo/keto reductase family. Post-translationally, asymmetrically dimethylated at Arg-191 and Arg-366 during flagellum resorption. Probably methylated by PRMT1.

The protein localises to the cytoplasm. It localises to the cytoskeleton. The protein resides in the flagellum axoneme. In terms of biological role, flagellar radial spokes contribute to the regulation of dynein arm activity and thus the pattern of flagellar bending. They consist of a thin stalk, which is attached to the a subfiber of the outer doublet microtubule, and a bulbous head, which is attached to the stalk and appears to interact with the projections from the central pair of microtubules. The chain is Flagellar radial spoke protein 5 from Chlamydomonas reinhardtii (Chlamydomonas smithii).